A 299-amino-acid chain; its full sequence is MGIFVWRSSLSMTNIRWLHHRCLSLYNSSHGFNEAKIKKKLAQFTGGSVDLSKSDDGIAEICINNPTRMNAFTGTMMIELEERISDLENWQDGKGLIVYGAENTFCSGSDLNAVKAISNPQEGMMMCMLMQNTLTRLQRLPLVSVALIQGKALGGGAELCTACDFRLMTEGSEIRFVHKQMGLVPGWGGAARLIHIVGSRHALKLLSGAPRVQPENALELGLADNILTGTEAGVLSEAKNWIMPYIKGPSDVTRAVKKVIISGREQNLEDALRTEKEIFGTVWGGLANLQALAKGTKHK.

It belongs to the enoyl-CoA hydratase/isomerase family.

Its subcellular location is the cytoplasm. It localises to the cytosol. It catalyses the reaction (2S)-ethylmalonyl-CoA + H(+) = butanoyl-CoA + CO2. The catalysed reaction is (S)-methylmalonyl-CoA + H(+) = propanoyl-CoA + CO2. It carries out the reaction (2R)-ethylmalonyl-CoA + H(+) = butanoyl-CoA + CO2. Functionally, decarboxylates ethylmalonyl-CoA, a potentially toxic metabolite, to form butyryl-CoA, suggesting it might be involved in metabolite proofreading. Acts preferentially on (S)-ethylmalonyl-CoA but also has some activity on the (R)-isomer. Also has methylmalonyl-CoA decarboxylase activity at lower level. The protein is Ethylmalonyl-CoA decarboxylase (echdc1) of Xenopus laevis (African clawed frog).